Consider the following 540-residue polypeptide: Ubiquitin carboxyl-terminal hydrolase 17-like protein E (540 aa).

The tract at residues 1-22 (MVVSLSFPEETGGENLPSAPLE) is disordered. Positions 85–382 (CGLQNTGNSC…NAYVLFYVQQ (298 aa)) constitute a USP domain. C94 functions as the Nucleophile in the catalytic mechanism. The active-site Proton acceptor is H341. Composition is skewed to basic and acidic residues over residues 431 to 441 (NREKRAKKETS) and 508 to 520 (APDK…HNGD). 2 disordered regions span residues 431–461 (NREK…QKHG) and 499–540 (RSTA…QGGR). Polar residues predominate over residues 523-540 (LTSQGLMSPGQLCSQGGR).

It belongs to the peptidase C19 family. USP17 subfamily. As to quaternary structure, interacts with SUDS3; the interaction is direct.

It is found in the nucleus. Its subcellular location is the endoplasmic reticulum. The enzyme catalyses Thiol-dependent hydrolysis of ester, thioester, amide, peptide and isopeptide bonds formed by the C-terminal Gly of ubiquitin (a 76-residue protein attached to proteins as an intracellular targeting signal).. Functionally, deubiquitinating enzyme that removes conjugated ubiquitin from specific proteins to regulate different cellular processes that may include cell proliferation, progression through the cell cycle, apoptosis, cell migration, and the cellular response to viral infection. This chain is Ubiquitin carboxyl-terminal hydrolase 17-like protein E (Usp17le), found in Mus musculus (Mouse).